Reading from the N-terminus, the 213-residue chain is MTKGILGRKIGMTQIFAENGDLIPVTVIHATPNVVLQKKTIENDGYEAIQLGFEDISEKRANKPQIGHAAKANTAPKRFIREIRGANINEYEVGQEVKVDIFSEGDIVDVTGISKGKGFQGAIKRHGQSRGPMAHGSRYHRRPGSMGAIAPNRVFKTKNLPGRMGGERVTIQNLKIVKVDPERNLLLIKGNVPGPRKGLVIVKSAVKAKAKAK.

The interval 122-147 is disordered; sequence AIKRHGQSRGPMAHGSRYHRRPGSMG.

The protein belongs to the universal ribosomal protein uL3 family. Part of the 50S ribosomal subunit. Forms a cluster with proteins L14 and L19.

Its function is as follows. One of the primary rRNA binding proteins, it binds directly near the 3'-end of the 23S rRNA, where it nucleates assembly of the 50S subunit. The protein is Large ribosomal subunit protein uL3 of Geobacillus stearothermophilus (Bacillus stearothermophilus).